Consider the following 339-residue polypeptide: Small ribosomal subunit biogenesis GTPase RsgA (339 aa).

The region spanning 111 to 271 (MRGLLKPVAA…LIDSPGIREF (161 aa)) is the CP-type G domain. Residues 159-162 (NKAD) and 213-221 (GQSGVGKSS) each bind GTP. Cys-295, Cys-300, His-302, and Cys-308 together coordinate Zn(2+).

Belongs to the TRAFAC class YlqF/YawG GTPase family. RsgA subfamily. Monomer. Associates with 30S ribosomal subunit, binds 16S rRNA. The cofactor is Zn(2+).

The protein resides in the cytoplasm. Functionally, one of several proteins that assist in the late maturation steps of the functional core of the 30S ribosomal subunit. Helps release RbfA from mature subunits. May play a role in the assembly of ribosomal proteins into the subunit. Circularly permuted GTPase that catalyzes slow GTP hydrolysis, GTPase activity is stimulated by the 30S ribosomal subunit. This Pseudomonas aeruginosa (strain UCBPP-PA14) protein is Small ribosomal subunit biogenesis GTPase RsgA.